A 199-amino-acid polypeptide reads, in one-letter code: Putative acetyltransferase SACOL2570 (199 aa).

It belongs to the transferase hexapeptide repeat family.

The protein is Putative acetyltransferase SACOL2570 of Staphylococcus aureus (strain COL).